Here is a 177-residue protein sequence, read N- to C-terminus: Coatomer subunit zeta-1 (177 aa).

Met1 is subject to N-acetylmethionine.

It belongs to the adaptor complexes small subunit family. As to quaternary structure, oligomeric complex that consists of at least the alpha, beta, beta', gamma, delta, epsilon and zeta subunits.

It localises to the cytoplasm. It is found in the golgi apparatus membrane. The protein resides in the cytoplasmic vesicle. Its subcellular location is the COPI-coated vesicle membrane. Functionally, the coatomer is a cytosolic protein complex that binds to dilysine motifs and reversibly associates with Golgi non-clathrin-coated vesicles, which further mediate biosynthetic protein transport from the ER, via the Golgi up to the trans Golgi network. Coatomer complex is required for budding from Golgi membranes, and is essential for the retrograde Golgi-to-ER transport of dilysine-tagged proteins. The zeta subunit may be involved in regulating the coat assembly and, hence, the rate of biosynthetic protein transport due to its association-dissociation properties with the coatomer complex. The polypeptide is Coatomer subunit zeta-1 (COPZ1) (Bos taurus (Bovine)).